Consider the following 392-residue polypeptide: Metallophosphoesterase 1 (392 aa).

A helical membrane pass occupies residues 25 to 45 (KLAALVFAVVLFCEFLIYYLV). Asp-73, Asp-115, Asn-153, His-246, His-300, and His-302 together coordinate a divalent metal cation. A helical transmembrane segment spans residues 352–372 (DTVLATYCVAAGLLVVLILVH).

This sequence belongs to the metallophosphoesterase superfamily. MPPE1 family. Interacts with GPI-anchor proteins (via the GPI portion). Interacts with TMED10. The cofactor is Mn(2+).

It localises to the endoplasmic reticulum-Golgi intermediate compartment membrane. Metallophosphoesterase that catalyzes the removal of a side-chain ethanolamine-phosphate (EtNP) from the second mannose of the GPI-anchor protein intermediate. Participates in the glycan remodeling steps of GPI-anchor maturation to allow an efficient transport of GPI-anchor proteins from the endoplasmic reticulum to the Golgi. The chain is Metallophosphoesterase 1 from Ailuropoda melanoleuca (Giant panda).